Consider the following 549-residue polypeptide: Ceramide kinase 1 (549 aa).

Residues 162–316 (NRPKNIIIFI…VDVCTVHQHQ (155 aa)) form the DAGKc domain. Residues 172 to 174 (NPF) and 205 to 209 (TERAN) contribute to the ATP site. 233–236 (GGDG) contacts substrate. The Proton donor/acceptor role is filled by D235. Residues E240, 277–279 (GSA), R342, R348, and 500–502 (DGE) each bind ATP.

It carries out the reaction an N-acylsphing-4-enine + ATP = an N-acylsphing-4-enine 1-phosphate + ADP + H(+). The enzyme catalyses an N-acyl-15-methylhexadecasphing-4-enine + ATP = an N-acyl-15-methylhexadecasphing-4-enine-1-phosphate + ADP + H(+). The protein operates within lipid metabolism; sphingolipid metabolism. Catalyzes the phosphorylation of ceramide to form ceramide 1-phosphate. C.elegans contain specific sphingoid bases, which are unique or different in structure compared to the sphingoid bases found in other animals. Two examples of these distinctive compounds are: 15-methylhexadecasphinganine and 15-methylhexadecasphing-4-enine. The polypeptide is Ceramide kinase 1 (Caenorhabditis elegans).